We begin with the raw amino-acid sequence, 341 residues long: MTTYKDAGVNIEEGYKAVNLIKSLARETFDSNVITDIGSFGSMYLLNIGNSEYILVSGTDGVGTKLKIAFYLDKHDTVGIDCVAMCVNDILCHGAKPLFFLDYIACGKLNSSKVANIVKGIAEGCKMAGCSLVGGETAEMPGFYKEDEYDLAGFVVGIVERQKAVCGKDVNTGDVLIGLASSGVHSNGYSLVRKVFGIDDNPKVLEKIYEELGLSLGEELLKPTRIYVKPVLKVLERVNVKGIAHITGGGFFENIPRAFPKGYFAIIEKGSWEVPAIFRLIQEYGKVEEREMFSTFNMGIGMVLIVSEEDVDLTMKILEQEKVNAWVIGTIQKGEDGVVLK.

Belongs to the AIR synthase family.

The protein localises to the cytoplasm. The enzyme catalyses 2-formamido-N(1)-(5-O-phospho-beta-D-ribosyl)acetamidine + ATP = 5-amino-1-(5-phospho-beta-D-ribosyl)imidazole + ADP + phosphate + H(+). Its pathway is purine metabolism; IMP biosynthesis via de novo pathway; 5-amino-1-(5-phospho-D-ribosyl)imidazole from N(2)-formyl-N(1)-(5-phospho-D-ribosyl)glycinamide: step 2/2. The sequence is that of Phosphoribosylformylglycinamidine cyclo-ligase from Caldicellulosiruptor bescii (strain ATCC BAA-1888 / DSM 6725 / KCTC 15123 / Z-1320) (Anaerocellum thermophilum).